A 348-amino-acid chain; its full sequence is UDP-3-O-acylglucosamine N-acyltransferase (348 aa).

The active-site Proton acceptor is the His237.

Belongs to the transferase hexapeptide repeat family. LpxD subfamily. As to quaternary structure, homotrimer.

The enzyme catalyses a UDP-3-O-[(3R)-3-hydroxyacyl]-alpha-D-glucosamine + a (3R)-hydroxyacyl-[ACP] = a UDP-2-N,3-O-bis[(3R)-3-hydroxyacyl]-alpha-D-glucosamine + holo-[ACP] + H(+). The protein operates within bacterial outer membrane biogenesis; LPS lipid A biosynthesis. Functionally, catalyzes the N-acylation of UDP-3-O-acylglucosamine using 3-hydroxyacyl-ACP as the acyl donor. Is involved in the biosynthesis of lipid A, a phosphorylated glycolipid that anchors the lipopolysaccharide to the outer membrane of the cell. The protein is UDP-3-O-acylglucosamine N-acyltransferase of Geotalea daltonii (strain DSM 22248 / JCM 15807 / FRC-32) (Geobacter daltonii).